Reading from the N-terminus, the 376-residue chain is N-acetyldiaminopimelate deacetylase (376 aa).

D69 is a catalytic residue. The active-site Proton acceptor is the E128.

The protein belongs to the peptidase M20A family. N-acetyldiaminopimelate deacetylase subfamily.

It carries out the reaction N-acetyl-(2S,6S)-2,6-diaminopimelate + H2O = (2S,6S)-2,6-diaminopimelate + acetate. It functions in the pathway amino-acid biosynthesis; L-lysine biosynthesis via DAP pathway; LL-2,6-diaminopimelate from (S)-tetrahydrodipicolinate (acetylase route): step 3/3. Its function is as follows. Catalyzes the conversion of N-acetyl-diaminopimelate to diaminopimelate and acetate. The sequence is that of N-acetyldiaminopimelate deacetylase from Bacillus anthracis (strain A0248).